The primary structure comprises 212 residues: External core antigen (212 aa).

The first 19 residues, 1 to 19 (MQLFHLCLIISCSCPTVQA), serve as a signal peptide directing secretion. Residues 25–27 (GWL) form an HBEAG region. The segment at 165–212 (NAPILSTLPETTVVRRRGRSPRRRTPSPRRRRSQSPRRRRSQSRESQC) is disordered. Basic residues predominate over residues 178-205 (VRRRGRSPRRRTPSPRRRRSQSPRRRRS). The stretch at 184 to 190 (SPRRRTP) is one 1; half-length repeat. Positions 184–206 (SPRRRTPSPRRRRSQSPRRRRSQ) are 3 X 8 AA repeats of S-P-R-R-R-R-S-Q. A propeptide spanning residues 184–212 (SPRRRTPSPRRRRSQSPRRRRSQSRESQC) is cleaved from the precursor. Tandem repeats lie at residues 191–198 (SPRRRRSQ) and 199–206 (SPRRRRSQ).

The protein belongs to the orthohepadnavirus precore antigen family. Homodimerizes. In terms of processing, phosphorylated. Cleaved by host furin.

Its subcellular location is the secreted. The protein resides in the host nucleus. Functionally, may regulate immune response to the intracellular capsid in acting as a T-cell tolerogen, by having an immunoregulatory effect which prevents destruction of infected cells by cytotoxic T-cells. This immune regulation may predispose to chronicity during perinatal infections and prevent severe liver injury during adult infections. This Homo sapiens (Human) protein is External core antigen.